Consider the following 115-residue polypeptide: NADH-ubiquinone oxidoreductase chain 3 (115 aa).

A run of 3 helical transmembrane segments spans residues 4–24 (LMVL…AFWL), 55–75 (FFLV…LLPL), and 84–104 (INIM…GLAY).

The protein belongs to the complex I subunit 3 family. Core subunit of respiratory chain NADH dehydrogenase (Complex I) which is composed of 45 different subunits. Interacts with TMEM186. Interacts with TMEM242.

The protein resides in the mitochondrion membrane. The enzyme catalyses a ubiquinone + NADH + 5 H(+)(in) = a ubiquinol + NAD(+) + 4 H(+)(out). Its function is as follows. Core subunit of the mitochondrial membrane respiratory chain NADH dehydrogenase (Complex I) that is believed to belong to the minimal assembly required for catalysis. Complex I functions in the transfer of electrons from NADH to the respiratory chain. The immediate electron acceptor for the enzyme is believed to be ubiquinone. The sequence is that of NADH-ubiquinone oxidoreductase chain 3 from Onychomys leucogaster (Northern grasshopper mouse).